The following is a 439-amino-acid chain: GTPase Der (439 aa).

EngA-type G domains lie at 4–168 (PIVA…KDDE) and 177–352 (INIA…DNYT). GTP-binding positions include 10-17 (GRPNVGKS), 57-61 (DTGGI), 120-123 (NKID), 183-190 (GKPNVGKS), 230-234 (DTAGL), and 295-298 (NKWD). The KH-like domain occupies 353–437 (KRVKTGVLND…GIKTEFRERK (85 aa)).

The protein belongs to the TRAFAC class TrmE-Era-EngA-EngB-Septin-like GTPase superfamily. EngA (Der) GTPase family. Associates with the 50S ribosomal subunit.

GTPase that plays an essential role in the late steps of ribosome biogenesis. This is GTPase Der from Clostridium botulinum (strain Loch Maree / Type A3).